The chain runs to 96 residues: Small ribosomal subunit protein uS15 (96 aa).

It belongs to the universal ribosomal protein uS15 family. As to quaternary structure, part of the 30S ribosomal subunit. Forms a bridge to the 50S subunit in the 70S ribosome, contacting the 23S rRNA.

Its function is as follows. One of the primary rRNA binding proteins, it binds directly to 16S rRNA where it helps nucleate assembly of the platform of the 30S subunit by binding and bridging several RNA helices of the 16S rRNA. Functionally, forms an intersubunit bridge (bridge B4) with the 23S rRNA of the 50S subunit in the ribosome. In Streptomyces griseus subsp. griseus (strain JCM 4626 / CBS 651.72 / NBRC 13350 / KCC S-0626 / ISP 5235), this protein is Small ribosomal subunit protein uS15.